Consider the following 134-residue polypeptide: Large ribosomal subunit protein uL16c (134 aa).

This sequence belongs to the universal ribosomal protein uL16 family. As to quaternary structure, part of the 50S ribosomal subunit.

It localises to the plastid. It is found in the chloroplast. This chain is Large ribosomal subunit protein uL16c, found in Atropa belladonna (Belladonna).